The primary structure comprises 188 residues: Mitochondrial import inner membrane translocase subunit TIM23-2 (188 aa).

4 consecutive transmembrane segments (helical) span residues 64-84 (TGTAYLGGSVAGASVGVITGV), 112-131 (GNRIGIIGLVYAGIESGIVA), 138-154 (VWTSVVAGLGTGAVCRA), and 161-178 (AAVAGALGGLAAGAVVAG).

It belongs to the Tim17/Tim22/Tim23 family. Homomultimer. Component of the TIM17:23 complex at least composed of TIM23, TIM17 and TIM50. The complex interacts with the TIM44 component of the PAM complex. Also part of the NADH-ubiquinone oxidoreductase complex I. Interacts with OEP163, TIM17-2, TIM21, TIM50 and MPPA2. Expressed in roots and young cotyledons. Detected in leaves and flowers.

The protein resides in the mitochondrion inner membrane. Functionally, essential component of the TIM17:23 complex, a complex that mediates the translocation of transit peptide-containing proteins across the mitochondrial inner membrane. Links the inner and outer membranes. This chain is Mitochondrial import inner membrane translocase subunit TIM23-2 (TIM23-2), found in Arabidopsis thaliana (Mouse-ear cress).